The primary structure comprises 211 residues: Large ribosomal subunit protein bL9 (211 aa).

The segment at 183 to 211 (AAASEDEELAETAGVAPAEPSEEDDSAKA) is disordered. The span at 202 to 211 (PSEEDDSAKA) shows a compositional bias: acidic residues.

Belongs to the bacterial ribosomal protein bL9 family.

In terms of biological role, binds to the 23S rRNA. This Roseobacter denitrificans (strain ATCC 33942 / OCh 114) (Erythrobacter sp. (strain OCh 114)) protein is Large ribosomal subunit protein bL9.